The primary structure comprises 303 residues: Aspartate carbamoyltransferase catalytic subunit (303 aa).

Carbamoyl phosphate-binding residues include Arg49 and Thr50. Lys77 provides a ligand contact to L-aspartate. Positions 99, 126, and 129 each coordinate carbamoyl phosphate. L-aspartate is bound by residues Arg159 and Arg211. Residues Ser252 and Pro253 each coordinate carbamoyl phosphate.

It belongs to the aspartate/ornithine carbamoyltransferase superfamily. ATCase family. As to quaternary structure, heterododecamer (2C3:3R2) of six catalytic PyrB chains organized as two trimers (C3), and six regulatory PyrI chains organized as three dimers (R2).

It catalyses the reaction carbamoyl phosphate + L-aspartate = N-carbamoyl-L-aspartate + phosphate + H(+). It participates in pyrimidine metabolism; UMP biosynthesis via de novo pathway; (S)-dihydroorotate from bicarbonate: step 2/3. Catalyzes the condensation of carbamoyl phosphate and aspartate to form carbamoyl aspartate and inorganic phosphate, the committed step in the de novo pyrimidine nucleotide biosynthesis pathway. This is Aspartate carbamoyltransferase catalytic subunit from Listeria monocytogenes serotype 4b (strain F2365).